Reading from the N-terminus, the 159-residue chain is Large ribosomal subunit protein uL15 (159 aa).

Basic and acidic residues predominate over residues 1–13 (MRIHEVTPKEGST). The interval 1 to 51 (MRIHEVTPKEGSTKRRRRVGRGISAGQGASCGFGMRGQKSRSGTGTKAGFE) is disordered. A compositionally biased stretch (gly residues) spans 23–35 (ISAGQGASCGFGM).

It belongs to the universal ribosomal protein uL15 family. As to quaternary structure, part of the 50S ribosomal subunit.

In terms of biological role, binds to the 23S rRNA. This Rippkaea orientalis (strain PCC 8801 / RF-1) (Cyanothece sp. (strain PCC 8801)) protein is Large ribosomal subunit protein uL15.